The primary structure comprises 105 residues: UPF0235 protein Mchl_2407 (105 aa).

Belongs to the UPF0235 family.

The polypeptide is UPF0235 protein Mchl_2407 (Methylorubrum extorquens (strain CM4 / NCIMB 13688) (Methylobacterium extorquens)).